The chain runs to 232 residues: MTATKMNAQEIIQFIANAEKKTSVKVTFEGQLATSVPSSVVKLGNVLFGDWKDVAPLLEGLVENQDYVVEQDARNSAVPLLDKRAINARIEPGAIIRDQVEIGDNAVIMMGAVINIGAEIGAGTMIDMGAILGGRAIVGKNSHVGAGAVLAGVIEPASAEPVRVGDNVLIGANAVVIEGVQIGSGSVVAAGAIVTQDVPENVVVAGVPARIIKEIDAQTQQKTALEDALRTL.

The protein belongs to the transferase hexapeptide repeat family. DapH subfamily.

The catalysed reaction is (S)-2,3,4,5-tetrahydrodipicolinate + acetyl-CoA + H2O = L-2-acetamido-6-oxoheptanedioate + CoA. Its pathway is amino-acid biosynthesis; L-lysine biosynthesis via DAP pathway; LL-2,6-diaminopimelate from (S)-tetrahydrodipicolinate (acetylase route): step 1/3. Its function is as follows. Catalyzes the transfer of an acetyl group from acetyl-CoA to tetrahydrodipicolinate. The chain is 2,3,4,5-tetrahydropyridine-2,6-dicarboxylate N-acetyltransferase from Streptococcus pneumoniae (strain CGSP14).